A 405-amino-acid polypeptide reads, in one-letter code: Argininosuccinate synthase (405 aa).

Residues 10-18 and A37 contribute to the ATP site; that span reads AFSGGLDTS. L-citrulline contacts are provided by Y90 and S95. G120 provides a ligand contact to ATP. L-aspartate contacts are provided by T122, N126, and D127. Residue N126 participates in L-citrulline binding. Residues R130, S181, S190, E266, and Y278 each contribute to the L-citrulline site.

Belongs to the argininosuccinate synthase family. Type 1 subfamily. As to quaternary structure, homotetramer.

The protein resides in the cytoplasm. It catalyses the reaction L-citrulline + L-aspartate + ATP = 2-(N(omega)-L-arginino)succinate + AMP + diphosphate + H(+). The protein operates within amino-acid biosynthesis; L-arginine biosynthesis; L-arginine from L-ornithine and carbamoyl phosphate: step 2/3. The sequence is that of Argininosuccinate synthase from Rhizorhabdus wittichii (strain DSM 6014 / CCUG 31198 / JCM 15750 / NBRC 105917 / EY 4224 / RW1) (Sphingomonas wittichii).